Reading from the N-terminus, the 496-residue chain is Probable cytosol aminopeptidase (496 aa).

Mn(2+)-binding residues include Lys-266 and Asp-271. Lys-278 is an active-site residue. Mn(2+) contacts are provided by Asp-290, Asp-349, and Glu-351. Arg-353 is a catalytic residue.

Belongs to the peptidase M17 family. It depends on Mn(2+) as a cofactor.

It localises to the cytoplasm. The enzyme catalyses Release of an N-terminal amino acid, Xaa-|-Yaa-, in which Xaa is preferably Leu, but may be other amino acids including Pro although not Arg or Lys, and Yaa may be Pro. Amino acid amides and methyl esters are also readily hydrolyzed, but rates on arylamides are exceedingly low.. The catalysed reaction is Release of an N-terminal amino acid, preferentially leucine, but not glutamic or aspartic acids.. Functionally, presumably involved in the processing and regular turnover of intracellular proteins. Catalyzes the removal of unsubstituted N-terminal amino acids from various peptides. The polypeptide is Probable cytosol aminopeptidase (Trichodesmium erythraeum (strain IMS101)).